Consider the following 518-residue polypeptide: Probable alginate O-acetylase AlgI (518 aa).

8 helical membrane passes run 2–24 (VFSSNVFLFMFLPIFLGLYYLSG), 39–61 (FYAWWRVDFLALFIGVTVWNYWI), 78–100 (WLLLGVIVDLCILGYFKYANFGV), 115–137 (FILTHVLLPIGISFYVFESISYI), 150–172 (NLIDFAAFVAIFPHLIAGPVLRF), 319–341 (GLWHGANVTYIIWGAWHGMWLAI), 354–373 (FNVIRWALTFLLVVIGWVIF), and 402–424 (ASLTGLQVATLVVAYATLAFFGL). The active site involves H322. The tract at residues 435–456 (SGKSARADGPATEQPGTIKAVP) is disordered. A helical membrane pass occupies residues 493 to 515 (LILLLFVASILKLSAQSFSPFLY).

Belongs to the membrane-bound acyltransferase family.

The protein localises to the cell inner membrane. The protein operates within glycan biosynthesis; alginate biosynthesis. Functionally, together with AlgJ and AlgF, forms an inner membrane complex which probably interacts with the alginate polymerization-transport complex and adds acetyl groups at the O-2 and O-3 positions of mannuronate residues. Acetylation of alginate is important for the architecture of biofilms and increases the ability of alginate to act as a defense barrier. This chain is Probable alginate O-acetylase AlgI (algI), found in Pseudomonas syringae pv. tomato (strain ATCC BAA-871 / DC3000).